Here is an 841-residue protein sequence, read N- to C-terminus: MSSIARPPDPCLVAIILIVRSRAGPRFVFHYPPNPLSENGLRPVRKERRTSRSKNGQGYKSNESSSSEESGSSSDDDEDEHQRQLQSQNQSQSHLSGSVVSGRRSSNFGLDDHVAMSVSPGGDSQRAGSMGSGRTSFRKRGGNSDVEEDSGAASDRQEDGSGGAGGPYRPPWESLLGLPADVWEKLLSPSPAWHKRRFEVGINDLAFIGWPVFVREDGTWRKQRRKKKKKWRAEWEGGELGHNENAEDAPDDEDGDAGGNASGGGGLMAASTETLSPKQMALSEAKRGSGSSSKAARSSVDCLDGDDKDSMTMFNVVFVLDPPLLEYSMRTREIYDNIIKKFAKALKWEQARTDYVWREAQHISHLKEKAKERRTSLNTLYTELINQSSLARAIYTVYTSISASKIASVQLSPDVSISLQIPPLTSTPYLPGPTDKAYPGLWLTTADSVTPVEDPTADENTAPHQVLAKHFALLLLDNEAAILKDVEASGGALAPALAHYLRCSKPTKSFAQISASSGIPLSTIQMLASHLVYWRRARAIPPIHQRDTYIVSPNCDLSKLEIATAAYQVAFPTLPSLPKMLSALSGTPRPYGSFIPSKDHKETYFAILAWLLRGGWVTQLRSFARVKVTPEIKMAVEVALRREEVDKYLRKGRSLEAQKSADGENGNEADENDDASSSSSSSLASQGSGDETPMPGRYQQESNLRLSHSMLDRNTSLRTSSLILFPHRASPLESRWLEQIVSRFPEHPRTAGRHRRGEGSNAAGGEIDPEYAALSTPMKDLWPTYIKYFNGLDALEKIPVREGLKRKLVWQVLTRLGLVTSQQSSIELDPREQVLVSVRHW.

A signal peptide spans 1 to 23 (MSSIARPPDPCLVAIILIVRSRA). Disordered stretches follow at residues 30–172 (HYPP…RPPW), 221–301 (RKQR…SSVD), and 656–698 (EAQK…PGRY). Residues 43–52 (PVRKERRTSR) are compositionally biased toward basic residues. Composition is skewed to low complexity over residues 61 to 73 (SNES…SGSS) and 84 to 106 (QLQS…RRSS). A compositionally biased stretch (basic residues) spans 221–231 (RKQRRKKKKKW). Basic and acidic residues predominate over residues 232-245 (RAEWEGGELGHNEN). The segment covering 246–256 (AEDAPDDEDGD) has biased composition (acidic residues). Positions 257 to 267 (AGGNASGGGGL) are enriched in gly residues. A compositionally biased stretch (low complexity) spans 288–299 (GSGSSSKAARSS). The span at 665-674 (NGNEADENDD) shows a compositional bias: acidic residues. Over residues 675-689 (ASSSSSSSLASQGSG) the composition is skewed to low complexity.

Belongs to the NPR3 family.

Functionally, mediates inactivation of the TORC1 complex in response to amino acid starvation. Required for meiotic nuclear division. The sequence is that of Nitrogen permease regulator 3 (npr3) from Neosartorya fischeri (strain ATCC 1020 / DSM 3700 / CBS 544.65 / FGSC A1164 / JCM 1740 / NRRL 181 / WB 181) (Aspergillus fischerianus).